A 319-amino-acid polypeptide reads, in one-letter code: MTYSRILGTGGYLPARILTNADLEKLVDTNDQWIVDRTGIRERHIAADGEFTSDLATAAARAALEAANLAADDIDLLLVATTTPDLVFPSTACIVQSKLGMTNGKPAFDLQAVCSGFVYALSVADQFIKGGAAKHVLVVGAETLSRITDWNDRSNCILWGDGAGAVVVGASSEPGIIATHIHADGRHKELLRTTTGPSSGSKTPALMRMEGNAVFKMAVNTLDRIVDETLEANGLAKTDIDWLVPHQANIRIISATAKKLGMSMDNVVTTVAGHGNTSAASVPLAFDAAVRDGRIKRGQIVLMEAFGGGFTWGSALLRY.

Active-site residues include Cys114 and His246. The tract at residues 247 to 251 (QANIR) is ACP-binding. The active site involves Asn276.

It belongs to the thiolase-like superfamily. FabH family. As to quaternary structure, homodimer.

It is found in the cytoplasm. It carries out the reaction malonyl-[ACP] + acetyl-CoA + H(+) = 3-oxobutanoyl-[ACP] + CO2 + CoA. It participates in lipid metabolism; fatty acid biosynthesis. Catalyzes the condensation reaction of fatty acid synthesis by the addition to an acyl acceptor of two carbons from malonyl-ACP. Catalyzes the first condensation reaction which initiates fatty acid synthesis and may therefore play a role in governing the total rate of fatty acid production. Possesses both acetoacetyl-ACP synthase and acetyl transacylase activities. Its substrate specificity determines the biosynthesis of branched-chain and/or straight-chain of fatty acids. In Thiobacillus denitrificans (strain ATCC 25259 / T1), this protein is Beta-ketoacyl-[acyl-carrier-protein] synthase III.